Reading from the N-terminus, the 456-residue chain is Pantothenate kinase 2, mitochondrial (456 aa).

Positions 16-89 (AGRFGAPMER…TSAGRPRAEG (74 aa)) are disordered. Low complexity-rich tracts occupy residues 28 to 39 (RAAATSAAVGES) and 55 to 65 (SSAAPSGSGEA). 3 positions are modified to phosphoserine: S55, S56, and S75. Positions 154 to 161 (LELKDLTL) match the Nuclear export signal motif. E224 acts as the Proton acceptor in catalysis. Acetyl-CoA is bound by residues S278, S281, and R293.

The protein belongs to the type II pantothenate kinase family. In terms of assembly, homodimer.

It localises to the cytoplasm. The protein localises to the cytosol. It catalyses the reaction (R)-pantothenate + ATP = (R)-4'-phosphopantothenate + ADP + H(+). Its pathway is cofactor biosynthesis; coenzyme A biosynthesis; CoA from (R)-pantothenate: step 1/5. Its activity is regulated as follows. Inhibited by acetyl-CoA. Inhibited by calcium hopantenate. Activated by palmitoylcarnitine. Catalyzes the phosphorylation of pantothenate to generate 4'-phosphopantothenate in the first and rate-determining step of coenzyme A (CoA) synthesis. The sequence is that of Pantothenate kinase 2, mitochondrial (Pank2) from Mus musculus (Mouse).